The chain runs to 457 residues: Siroheme synthase (457 aa).

Positions 1-204 (MDHLPIFCQL…ADEKAVNATT (204 aa)) are precorrin-2 dehydrogenase /sirohydrochlorin ferrochelatase. Residues 22-23 (DV) and 43-44 (LN) each bind NAD(+). Position 128 is a phosphoserine (Ser128). Positions 216–457 (GEVVLVGAGP…RDKLNWFSNH (242 aa)) are uroporphyrinogen-III C-methyltransferase. Pro225 is an S-adenosyl-L-methionine binding site. Residue Asp248 is the Proton acceptor of the active site. Lys270 functions as the Proton donor in the catalytic mechanism. Residues 301-303 (GGD), Ile306, 331-332 (TA), Met382, and Gly411 each bind S-adenosyl-L-methionine.

The protein in the N-terminal section; belongs to the precorrin-2 dehydrogenase / sirohydrochlorin ferrochelatase family. In the C-terminal section; belongs to the precorrin methyltransferase family.

It carries out the reaction uroporphyrinogen III + 2 S-adenosyl-L-methionine = precorrin-2 + 2 S-adenosyl-L-homocysteine + H(+). It catalyses the reaction precorrin-2 + NAD(+) = sirohydrochlorin + NADH + 2 H(+). The catalysed reaction is siroheme + 2 H(+) = sirohydrochlorin + Fe(2+). It functions in the pathway cofactor biosynthesis; adenosylcobalamin biosynthesis; precorrin-2 from uroporphyrinogen III: step 1/1. The protein operates within cofactor biosynthesis; adenosylcobalamin biosynthesis; sirohydrochlorin from precorrin-2: step 1/1. It participates in porphyrin-containing compound metabolism; siroheme biosynthesis; precorrin-2 from uroporphyrinogen III: step 1/1. Its pathway is porphyrin-containing compound metabolism; siroheme biosynthesis; siroheme from sirohydrochlorin: step 1/1. It functions in the pathway porphyrin-containing compound metabolism; siroheme biosynthesis; sirohydrochlorin from precorrin-2: step 1/1. Its function is as follows. Multifunctional enzyme that catalyzes the SAM-dependent methylations of uroporphyrinogen III at position C-2 and C-7 to form precorrin-2 via precorrin-1. Then it catalyzes the NAD-dependent ring dehydrogenation of precorrin-2 to yield sirohydrochlorin. Finally, it catalyzes the ferrochelation of sirohydrochlorin to yield siroheme. The polypeptide is Siroheme synthase (Salmonella paratyphi A (strain ATCC 9150 / SARB42)).